The following is a 495-amino-acid chain: Ubiquinone biosynthesis monooxygenase COQ6, mitochondrial (495 aa).

It belongs to the UbiH/COQ6 family. Component of a multi-subunit COQ enzyme complex. FAD is required as a cofactor.

It is found in the mitochondrion inner membrane. It catalyses the reaction a 4-hydroxy-3-(all-trans-polyprenyl)benzoate + 2 reduced [2Fe-2S]-[ferredoxin] + O2 + 2 H(+) = a 3,4-dihydroxy-5-(all-trans-polyprenyl)benzoate + 2 oxidized [2Fe-2S]-[ferredoxin] + H2O. The enzyme catalyses a 2-methoxy-6-(all-trans-polyprenyl)phenol + 2 reduced [2Fe-2S]-[ferredoxin] + O2 + 2 H(+) = a 2-methoxy-6-(all-trans-polyprenyl)benzene-1,4-diol + 2 oxidized [2Fe-2S]-[ferredoxin] + H2O. The protein operates within cofactor biosynthesis; ubiquinone biosynthesis. Its function is as follows. FAD-dependent monooxygenase required for two non-consecutive steps during ubiquinone biosynthesis. Required for the C5-ring hydroxylation during ubiquinone biosynthesis by catalyzing the hydroxylation of 4-hydroxy-3-(all-trans-polyprenyl)benzoic acid to 3,4-dihydroxy-5-(all-trans-polyprenyl)benzoic acid. Also acts downstream of coq4, for the C1-hydroxylation during ubiquinone biosynthesis by catalyzing the hydroxylation of 2-methoxy-6-(all-trans-polyprenyl)phenol to 2-methoxy-6-(all-trans-polyprenyl)benzene-1,4-diol. The electrons required for the hydroxylation reaction are funneled indirectly to coq6 from NADPH via a ferredoxin/ferredoxin reductase system. This Dictyostelium discoideum (Social amoeba) protein is Ubiquinone biosynthesis monooxygenase COQ6, mitochondrial.